The chain runs to 310 residues: MAERLTLAFMGSPDFSVPALHALHQAGHHIAAVYTQPPRPAGRGHRLTPCPVHRAAEALGLEVRHPALLKNAADEHEAFRALNLDAAVVAAYGLILPRVMLDTPQRGCLNIHASLLPRWRGASPIQNAILAGDTESGVTIMRMEEGLDTGPMLLKRAVPITETTTTPELHDALATAGAEAILHVLETQPDGENQDDALACYAPKLSRADGLLDWSQPAALLARRVRALNPWPGTFSGSLKILAAHAVTEASGIPGTVIGIGDDTLLIACGDGALCLDKVQKPGRPALDAAAFLRGHKLPAGTRLDEHGFS.

114-117 (SLLP) lines the (6S)-5,6,7,8-tetrahydrofolate pocket.

It belongs to the Fmt family.

It carries out the reaction L-methionyl-tRNA(fMet) + (6R)-10-formyltetrahydrofolate = N-formyl-L-methionyl-tRNA(fMet) + (6S)-5,6,7,8-tetrahydrofolate + H(+). In terms of biological role, attaches a formyl group to the free amino group of methionyl-tRNA(fMet). The formyl group appears to play a dual role in the initiator identity of N-formylmethionyl-tRNA by promoting its recognition by IF2 and preventing the misappropriation of this tRNA by the elongation apparatus. The protein is Methionyl-tRNA formyltransferase of Granulibacter bethesdensis (strain ATCC BAA-1260 / CGDNIH1).